We begin with the raw amino-acid sequence, 377 residues long: MDPAARVVRALWPGGCALAWRLGGRPQPLLPTQSRAGFAGAAGGPSPVAAARKGSPRLLGAAALALGGALGLYHTARWHLRAQDLHAERSAAQLSLSSRLQLTLYQYKTCPFCSKVRAFLDFHALPYQVVEVNPVRRAEIKFSSYRKVPILVAQEGESSQQLNDSSVIISALKTYLVSGQPLEEIITYYPAMKAVNEQGKEVTEFGNKYWLMLNEKEAQQVYGGKEARTEEMKWRQWADDWLVHLISPNVYRTPTEALASFDYIVREGKFGAVEGAVAKYMGAAAMYLISKRLKSRHRLQDNVREDLYEAADKWVAAVGKDRPFMGGQKPNLADLAVYGVLRVMEGLDAFDDLMQHTHIQPWYLRVERAITEASPAH.

Residues 1-57 (MDPAARVVRALWPGGCALAWRLGGRPQPLLPTQSRAGFAGAAGGPSPVAAARKGSPR) lie on the Lumenal side of the membrane. The chain crosses the membrane as a helical span at residues 58–74 (LLGAAALALGGALGLYH). At 75 to 377 (TARWHLRAQD…RAITEASPAH (303 aa)) the chain is on the cytoplasmic side. Residues 90-193 (SAAQLSLSSR…EIITYYPAMK (104 aa)) enclose the Glutaredoxin domain. Ser95 carries the phosphoserine modification. Glutathione is bound by residues Val148 and 164–165 (DS). The region spanning 263–377 (YIVREGKFGA…RAITEASPAH (115 aa)) is the GST C-terminal domain.

This sequence belongs to the GST superfamily. As to quaternary structure, homodimer. May interact with CEBPB. Interacts with EXOSC10. Synthesized as a Golgi membrane-associated protein, and the proteolytic removal of the N-terminal hydrophobic domain leads to the formation of a mature cytosolic enzyme. In terms of tissue distribution, widely expressed. Expressed in the heart, including apex, inter-ventricular septum, both atria and ventricles, but not in the aorta. Also expressed in fetal heart. Detected in various regions of the brain: cerebellum; occipital, frontal and parietal lobes. Also expressed in the lymph nodes, skeletal muscle, kidney and trachea, but not in the thymus or lung. Overexpressed in colorectal cancer.

Its subcellular location is the golgi apparatus membrane. The protein resides in the cytoplasm. It localises to the perinuclear region. The enzyme catalyses prostaglandin H2 = prostaglandin E2. It catalyses the reaction prostaglandin H2 = (12S)-hydroxy-(5Z,8E,10E)-heptadecatrienoate + malonaldehyde. It functions in the pathway lipid metabolism; prostaglandin biosynthesis. Its activity is regulated as follows. Isomerase activity is increased by sulfhydril compounds. Dithiothreitol (DTT) is most effective, followed by dihydrolipoic acid, glutathione (GSH) and 2-mercaptoethanol. Isomerase that catalyzes the conversion of PGH2 into the more stable prostaglandin E2 (PGE2) (in vitro). The biological function and the GSH-dependent property of PTGES2 is still under debate. In vivo, PTGES2 could form a complex with GSH and heme and would not participate in PGE2 synthesis but would catalyze the degradation of prostaglandin E2 H2 (PGH2) to 12(S)-hydroxy-5(Z),8(E),10(E)-heptadecatrienoic acid (HHT) and malondialdehyde (MDA). The sequence is that of Prostaglandin E synthase 2 (PTGES2) from Homo sapiens (Human).